The sequence spans 324 residues: uncharacterized protein (324 aa).

8 consecutive transmembrane segments (helical) span residues 5–24 (VIGI…NRAM), 39–61 (FIFM…PLLL), 68–90 (FYWI…FAAA), 95–117 (WLIA…LFYV), 130–152 (QKIP…LIQL), 162–179 (MLLF…AYPL), 199–218 (LGMT…YGWW), and 228–250 (TVQS…FWAT).

The protein resides in the cell membrane. This is an uncharacterized protein from Bacillus subtilis (strain 168).